We begin with the raw amino-acid sequence, 713 residues long: Forkhead box protein P2 (713 aa).

Residues 1–28 (MMQESVTETISNSSMNQNGMSTLSSQLD) show a composition bias toward polar residues. Disordered regions lie at residues 1-44 (MMQE…SSEV) and 279-337 (DNGI…TGAS). Residues 290-303 (TTNNSSSTTSSTTS) are compositionally biased toward low complexity. Residues 313–322 (SIVNGQSSVL) are compositionally biased toward polar residues. Over residues 324-335 (ARRDSSSHEETG) the composition is skewed to basic and acidic residues. Residues 344 to 369 (GVCKWPGCESICEDFGQFLKHLNNEH) form a C2H2-type zinc finger. The segment at 386 to 407 (VQQLEIQLSKERERLQAMMTHL) is leucine-zipper. The interval 420–424 (PLNLV) is CTBP1-binding. A compositionally biased stretch (low complexity) spans 436 to 457 (TSPQSLPQTPTTPTAPVTPITQ). The disordered stretch occupies residues 436 to 463 (TSPQSLPQTPTTPTAPVTPITQGPSVIT). A DNA-binding region (fork-head) is located at residues 502 to 592 (RPPFTYATLI…SQKITGSPTL (91 aa)). 2 disordered regions span residues 647-666 (LDHI…QPHI) and 676-713 (VIAE…EDLE). The span at 697–713 (LEDDREIEEEPLSEDLE) shows a compositional bias: acidic residues.

Forms homodimers and heterodimers with FOXP1 and FOXP4. Dimerization is required for DNA-binding. Interacts with CTBP1. Interacts with FOXP1. Interacts with TBR1. Interacts with ZMYM2.

The protein localises to the nucleus. Functionally, transcriptional repressor that may play a role in the specification and differentiation of lung epithelium. May also play a role in developing neural, gastrointestinal and cardiovascular tissues. Can act with CTBP1 to synergistically repress transcription but CTPBP1 is not essential. Plays a role in synapse formation by regulating SRPX2 levels. This is Forkhead box protein P2 (FOXP2) from Pongo pygmaeus (Bornean orangutan).